A 138-amino-acid polypeptide reads, in one-letter code: Mediator of RNA polymerase II transcription subunit 19 (138 aa).

This sequence belongs to the Mediator complex subunit 19 family. As to quaternary structure, component of the Mediator complex.

It localises to the nucleus. Functionally, component of the Mediator complex, a coactivator involved in the regulated transcription of nearly all RNA polymerase II-dependent genes. Mediator functions as a bridge to convey information from gene-specific regulatory proteins to the basal RNA polymerase II transcription machinery. Mediator is recruited to promoters by direct interactions with regulatory proteins and serves as a scaffold for the assembly of a functional preinitiation complex with RNA polymerase II and the general transcription factors. In Schizosaccharomyces pombe (strain 972 / ATCC 24843) (Fission yeast), this protein is Mediator of RNA polymerase II transcription subunit 19 (med19).